The chain runs to 568 residues: 2-succinyl-5-enolpyruvyl-6-hydroxy-3-cyclohexene-1-carboxylate synthase (568 aa).

It belongs to the TPP enzyme family. MenD subfamily. Homodimer. It depends on Mg(2+) as a cofactor. Mn(2+) serves as cofactor. Requires thiamine diphosphate as cofactor.

It catalyses the reaction isochorismate + 2-oxoglutarate + H(+) = 5-enolpyruvoyl-6-hydroxy-2-succinyl-cyclohex-3-ene-1-carboxylate + CO2. Its pathway is quinol/quinone metabolism; 1,4-dihydroxy-2-naphthoate biosynthesis; 1,4-dihydroxy-2-naphthoate from chorismate: step 2/7. It functions in the pathway quinol/quinone metabolism; menaquinone biosynthesis. Catalyzes the thiamine diphosphate-dependent decarboxylation of 2-oxoglutarate and the subsequent addition of the resulting succinic semialdehyde-thiamine pyrophosphate anion to isochorismate to yield 2-succinyl-5-enolpyruvyl-6-hydroxy-3-cyclohexene-1-carboxylate (SEPHCHC). The sequence is that of 2-succinyl-5-enolpyruvyl-6-hydroxy-3-cyclohexene-1-carboxylate synthase from Haemophilus influenzae (strain PittGG).